A 505-amino-acid polypeptide reads, in one-letter code: ATP synthase subunit alpha (505 aa).

169–176 (GDRQIGKT) provides a ligand contact to ATP.

Belongs to the ATPase alpha/beta chains family. F-type ATPases have 2 components, CF(1) - the catalytic core - and CF(0) - the membrane proton channel. CF(1) has five subunits: alpha(3), beta(3), gamma(1), delta(1), epsilon(1). CF(0) has three main subunits: a(1), b(2) and c(9-12). The alpha and beta chains form an alternating ring which encloses part of the gamma chain. CF(1) is attached to CF(0) by a central stalk formed by the gamma and epsilon chains, while a peripheral stalk is formed by the delta and b chains.

The protein localises to the cell inner membrane. The enzyme catalyses ATP + H2O + 4 H(+)(in) = ADP + phosphate + 5 H(+)(out). Its function is as follows. Produces ATP from ADP in the presence of a proton gradient across the membrane. The alpha chain is a regulatory subunit. This is ATP synthase subunit alpha from Desulfosudis oleivorans (strain DSM 6200 / JCM 39069 / Hxd3) (Desulfococcus oleovorans).